A 1291-amino-acid chain; its full sequence is Ethylene-insensitive protein 2.2 (1291 aa).

Transmembrane regions (helical) follow at residues 18–38 (ALPA…PGKW), 48–68 (FGFD…LCQY), 96–116 (FLGV…ILGI), 128–148 (LSTC…FATL), 155–175 (SFLS…GVLI), and 195–215 (SAFA…FFLH). The N-linked (GlcNAc...) asparagine glycan is linked to N227. 7 helical membrane passes run 231–251 (GALC…IYLV), 253–273 (YVLM…LLTF), 288–308 (VALC…ALTW), 335–355 (IIAV…GIYQ), 356–376 (LLIF…IPLF), 393–413 (FLEF…IIFV), and 441–461 (VLLI…ATPL). The disordered stretch occupies residues 498–518 (TEEESIGGQEQLSGPGKSAES). An N-linked (GlcNAc...) asparagine glycan is attached at N550. The interval 614–662 (AEKEDDEGDSWEPEESSKGVPGSTSSLTSDGPGSFRSLSGKSDEGGNGA) is disordered. Residues 617 to 627 (EDDEGDSWEPE) are compositionally biased toward acidic residues. Residues 635–653 (GSTSSLTSDGPGSFRSLSG) show a composition bias toward polar residues. 2 positions are modified to phosphoserine: S647 and S664. Disordered stretches follow at residues 742 to 768 (QIHS…GGQR) and 787 to 808 (GPSR…TLPS). Residues 759 to 768 (NIDSSYGGQR) show a composition bias toward polar residues. T818 is modified (phosphothreonine). A disordered region spans residues 836-856 (GSSSLNGQMDSPAPISPSLGP). An N-linked (GlcNAc...) asparagine glycan is attached at N891. Phosphoserine is present on S923. Residue N1027 is glycosylated (N-linked (GlcNAc...) asparagine). Residues 1210 to 1229 (HRSSPPVSNGMLPPASKPGR) are disordered. Residues 1262–1269 (DVAFPKGK) carry the Nuclear localization signal motif.

This sequence belongs to the NRAMP (TC 2.A.55) family.

Its subcellular location is the endoplasmic reticulum membrane. It is found in the nucleus. The protein resides in the cytoplasm. Functionally, central factor in signaling pathways regulated by ethylene (ET) and involved in various processes including development, plant defense, senescence, nucleotide sugar flux, and tropisms. Its function is as follows. Trafficking signal inducing ethylene response. The nuclear localization is both necessary and sufficient to activate EIN3-mediated transcription and ethylene responses. This Populus trichocarpa (Western balsam poplar) protein is Ethylene-insensitive protein 2.2.